A 407-amino-acid polypeptide reads, in one-letter code: Putative cystathionine beta-lyase (407 aa).

Residue Lys-237 is modified to N6-(pyridoxal phosphate)lysine.

This sequence belongs to the class-II pyridoxal-phosphate-dependent aminotransferase family. MalY/PatB cystathionine beta-lyase subfamily. The cofactor is pyridoxal 5'-phosphate.

The enzyme catalyses L,L-cystathionine + H2O = L-homocysteine + pyruvate + NH4(+). It catalyses the reaction an S-substituted L-cysteine + H2O = a thiol + pyruvate + NH4(+). The protein operates within amino-acid biosynthesis; L-methionine biosynthesis via de novo pathway; L-homocysteine from L-cystathionine: step 1/1. The protein is Putative cystathionine beta-lyase of Mycobacterium tuberculosis (strain CDC 1551 / Oshkosh).